Consider the following 753-residue polypeptide: Neuroendocrine convertase 1 (753 aa).

The first 27 residues, 1 to 27, serve as a signal peptide directing secretion; the sequence is MEQRGWTLQCTAFAFFCVWCALSSVKA. The propeptide occupies 28-110; that stretch reads KRQFVNEWAA…QQYEKERSKR (83 aa). Residues 129–450 form the Peptidase S8 domain; it reads QWYLQDTRMT…FGLLNAKALV (322 aa). Residues aspartate 167 and histidine 208 each act as charge relay system in the active site. 2 disulfides stabilise this stretch: cysteine 225/cysteine 374 and cysteine 317/cysteine 347. Serine 382 acts as the Charge relay system in catalysis. N-linked (GlcNAc...) asparagine glycosylation occurs at asparagine 401. The P/Homo B domain occupies 460-597; it reads NVPEKKECVV…KLILHGTSSQ (138 aa). Cysteines 467 and 494 form a disulfide. Residues 633 to 651 show a composition bias toward polar residues; sequence QKSLNGNLLVPKNSSSSNV. Positions 633 to 663 are disordered; it reads QKSLNGNLLVPKNSSSSNVEGRRDEQVQGTP. The N-linked (GlcNAc...) asparagine glycan is linked to asparagine 645.

This sequence belongs to the peptidase S8 family. Furin subfamily. Ca(2+) serves as cofactor.

It localises to the cytoplasmic vesicle. Its subcellular location is the secretory vesicle. The enzyme catalyses Release of protein hormones, neuropeptides and renin from their precursors, generally by hydrolysis of -Lys-Arg-|- bonds.. Its function is as follows. Involved in the processing of hormone and other protein precursors at sites comprised of pairs of basic amino acid residues. Substrates include POMC, renin, enkephalin, dynorphin, somatostatin, insulin and AGRP. This is Neuroendocrine convertase 1 (Pcsk1) from Mus cookii (Cook's mouse).